The sequence spans 250 residues: Superoxide dismutase 1 copper chaperone (250 aa).

Positions 4-67 constitute an HMA domain; sequence SFEIVFAVPM…AIQSTGKDAI (64 aa). 4 residues coordinate Cu cation: Cys15, Cys18, Cys229, and Cys231.

The protein belongs to the CCS1 family. Cu(2+) is required as a cofactor.

The protein resides in the cytoplasm. Copper chaperone for superoxide dismutase 1 (SOD1). Binds copper ions and delivers them specifically to SOD1. The sequence is that of Superoxide dismutase 1 copper chaperone (CCS1) from Debaryomyces hansenii (strain ATCC 36239 / CBS 767 / BCRC 21394 / JCM 1990 / NBRC 0083 / IGC 2968) (Yeast).